Consider the following 267-residue polypeptide: Sepiapterin reductase (267 aa).

M1 carries the post-translational modification N-acetylmethionine. 20–26 (GASRGFG) is an NADP(+) binding site. A Phosphoserine modification is found at S38. NADP(+) is bound by residues 48–49 (RN) and 75–76 (DL). Substrate is bound by residues 163–164 (SI) and Y176. NADP(+) is bound at residue K180. At S201 the chain carries Phosphoserine. G205 contacts substrate. An NADP(+)-binding site is contributed by 207 to 212 (LDTDMQ). S219 carries the phosphoserine modification. D263 is a binding site for substrate.

The protein belongs to the sepiapterin reductase family. As to quaternary structure, homodimer.

It localises to the cytoplasm. It carries out the reaction L-erythro-7,8-dihydrobiopterin + NADP(+) = L-sepiapterin + NADPH + H(+). It catalyses the reaction (6R)-L-erythro-5,6,7,8-tetrahydrobiopterin + 2 NADP(+) = 6-pyruvoyl-5,6,7,8-tetrahydropterin + 2 NADPH + 2 H(+). Catalyzes the final one or two reductions in tetra-hydrobiopterin biosynthesis to form 5,6,7,8-tetrahydrobiopterin. The sequence is that of Sepiapterin reductase (SPR) from Bos taurus (Bovine).